The primary structure comprises 197 residues: Xanthine phosphoribosyltransferase (197 aa).

The xanthine site is built by L20 and N27. 128-132 contacts 5-phospho-alpha-D-ribose 1-diphosphate; sequence ANGQA. Residue K156 coordinates xanthine.

The protein belongs to the purine/pyrimidine phosphoribosyltransferase family. Xpt subfamily. As to quaternary structure, homodimer.

Its subcellular location is the cytoplasm. It catalyses the reaction XMP + diphosphate = xanthine + 5-phospho-alpha-D-ribose 1-diphosphate. Its pathway is purine metabolism; XMP biosynthesis via salvage pathway; XMP from xanthine: step 1/1. In terms of biological role, converts the preformed base xanthine, a product of nucleic acid breakdown, to xanthosine 5'-monophosphate (XMP), so it can be reused for RNA or DNA synthesis. In Bacillus anthracis (strain A0248), this protein is Xanthine phosphoribosyltransferase.